The sequence spans 357 residues: RNA 3'-terminal phosphate cyclase (357 aa).

ATP contacts are provided by residues Gln102 and 293–296 (HMGD). His319 (tele-AMP-histidine intermediate) is an active-site residue.

The protein belongs to the RNA 3'-terminal cyclase family. Type 1 subfamily.

It localises to the cytoplasm. The enzyme catalyses a 3'-end 3'-phospho-ribonucleotide-RNA + ATP = a 3'-end 2',3'-cyclophospho-ribonucleotide-RNA + AMP + diphosphate. Functionally, catalyzes the conversion of 3'-phosphate to a 2',3'-cyclic phosphodiester at the end of RNA. The mechanism of action of the enzyme occurs in 3 steps: (A) adenylation of the enzyme by ATP; (B) transfer of adenylate to an RNA-N3'P to produce RNA-N3'PP5'A; (C) and attack of the adjacent 2'-hydroxyl on the 3'-phosphorus in the diester linkage to produce the cyclic end product. The biological role of this enzyme is unknown but it is likely to function in some aspects of cellular RNA processing. The polypeptide is RNA 3'-terminal phosphate cyclase (Staphylothermus marinus (strain ATCC 43588 / DSM 3639 / JCM 9404 / F1)).